The sequence spans 259 residues: FAD-linked sulfhydryl oxidase (259 aa).

This sequence belongs to the baculoviridae p33 family. In terms of assembly, homodimer.

It is found in the host cytoplasm. Its subcellular location is the host nucleus. The catalysed reaction is 2 R'C(R)SH + O2 = R'C(R)S-S(R)CR' + H2O2. In terms of biological role, functional FAD-linked sulfhydryl oxidase that is required for infectious budded virion (BV) production and for the formation of enveloped occluded virion (ODV). In Lepidoptera (butterflies and moths), this protein is FAD-linked sulfhydryl oxidase (P33).